The chain runs to 421 residues: Serine hydroxymethyltransferase (421 aa).

(6S)-5,6,7,8-tetrahydrofolate-binding positions include leucine 121 and 125–127; that span reads GHL. N6-(pyridoxal phosphate)lysine is present on lysine 230. 355–357 provides a ligand contact to (6S)-5,6,7,8-tetrahydrofolate; the sequence is SPF.

It belongs to the SHMT family. As to quaternary structure, homodimer. The cofactor is pyridoxal 5'-phosphate.

It localises to the cytoplasm. The enzyme catalyses (6R)-5,10-methylene-5,6,7,8-tetrahydrofolate + glycine + H2O = (6S)-5,6,7,8-tetrahydrofolate + L-serine. It functions in the pathway one-carbon metabolism; tetrahydrofolate interconversion. Its pathway is amino-acid biosynthesis; glycine biosynthesis; glycine from L-serine: step 1/1. Its function is as follows. Catalyzes the reversible interconversion of serine and glycine with tetrahydrofolate (THF) serving as the one-carbon carrier. This reaction serves as the major source of one-carbon groups required for the biosynthesis of purines, thymidylate, methionine, and other important biomolecules. Also exhibits THF-independent aldolase activity toward beta-hydroxyamino acids, producing glycine and aldehydes, via a retro-aldol mechanism. The chain is Serine hydroxymethyltransferase from Psychromonas ingrahamii (strain DSM 17664 / CCUG 51855 / 37).